A 122-amino-acid polypeptide reads, in one-letter code: Large ribosomal subunit protein uL18 (122 aa).

The protein belongs to the universal ribosomal protein uL18 family. Part of the 50S ribosomal subunit; part of the 5S rRNA/L5/L18/L25 subcomplex. Contacts the 5S and 23S rRNAs.

In terms of biological role, this is one of the proteins that bind and probably mediate the attachment of the 5S RNA into the large ribosomal subunit, where it forms part of the central protuberance. This chain is Large ribosomal subunit protein uL18, found in Mycobacterium ulcerans (strain Agy99).